Reading from the N-terminus, the 679-residue chain is DNA-directed RNA polymerase subunit beta' (679 aa).

C69, C71, C84, and C87 together coordinate Zn(2+). Mg(2+) contacts are provided by D486, D488, and D490.

Belongs to the RNA polymerase beta' chain family. RpoC1 subfamily. As to quaternary structure, in plastids the minimal PEP RNA polymerase catalytic core is composed of four subunits: alpha, beta, beta', and beta''. When a (nuclear-encoded) sigma factor is associated with the core the holoenzyme is formed, which can initiate transcription. Requires Mg(2+) as cofactor. The cofactor is Zn(2+).

It localises to the plastid. Its subcellular location is the chloroplast. It catalyses the reaction RNA(n) + a ribonucleoside 5'-triphosphate = RNA(n+1) + diphosphate. In terms of biological role, DNA-dependent RNA polymerase catalyzes the transcription of DNA into RNA using the four ribonucleoside triphosphates as substrates. The polypeptide is DNA-directed RNA polymerase subunit beta' (Physcomitrium patens (Spreading-leaved earth moss)).